A 526-amino-acid chain; its full sequence is MDPNSIEIELSDDDRVISFHANRQNLINISEYFKILLTKFNLHDKQQIPIKVPNAFVAYDIIVELTENTESNVGNLPVWEHYLEKLKFMDYVGLSAKMIRSIDTTNIVVPKSNFESLIKLYEQLGYNSSLIPLIKNSFQKDNTNILIEPHVAKKLLNVSESKIIHAGYTRGGLHVINYCDYIDRKIIHTFDKHNDFISFLSYSKWNHDASMEQYINSIAISPNKKYIALATTCGLIIYNLIDKTHHDTIQTNQNINFVDFNYSSTNIFYRKRKWIGANGSNKVGIYNLETSKEISIGIDNLRNYHSKLSSTGTDLCILSKNLLVMCDNFNRIVVINYALDKIIKILDSCIYLKNNDNTNTVFLFPSSNKKYLGHLIVNYKKIYVQKSDTYTLFVYYIDSKRQDLQYVIEYTGSAPVHIDISNKLVVIGDCTGFFSIYKYKSGKIVFRNKIKSHNSCVTSIAISSNNKMILTAGLDGLLKLWNSKTLNLIDSYYHGCEYVDFISFTSEFGLDFDNFLRKSISNKSIQ.

WD repeat units follow at residues 210–248 (SMEQYINSIAISPNKKYIALATTCGLIIYNLIDKTHHDT) and 452–491 (SHNSCVTSIAISSNNKMILTAGLDGLLKLWNSKTLNLIDS).

This is an uncharacterized protein from Acanthamoeba polyphaga mimivirus (APMV).